The primary structure comprises 132 residues: Transcription antitermination protein NusB (132 aa).

It belongs to the NusB family.

Its function is as follows. Involved in transcription antitermination. Required for transcription of ribosomal RNA (rRNA) genes. Binds specifically to the boxA antiterminator sequence of the ribosomal RNA (rrn) operons. This is Transcription antitermination protein NusB from Campylobacter lari (strain RM2100 / D67 / ATCC BAA-1060).